A 661-amino-acid chain; its full sequence is Putative core protein L410 (661 aa).

A compositionally biased stretch (basic and acidic residues) spans Met-1–Phe-11. A disordered region spans residues Met-1–Arg-26. Residues Gly-15–Lys-25 show a composition bias toward polar residues. Residues Lys-112–Glu-140 adopt a coiled-coil conformation.

It is found in the virion. This chain is Putative core protein L410, found in Acanthamoeba polyphaga (Amoeba).